A 297-amino-acid polypeptide reads, in one-letter code: Acetyl-coenzyme A carboxylase carboxyl transferase subunit beta (297 aa).

The disordered stretch occupies residues 1-23 (MSWIERILGRTSSSSSSSKSKVP). In terms of domain architecture, CoA carboxyltransferase N-terminal spans 26–295 (VWTKCTSCEQ…PFKTAELIVE (270 aa)). Zn(2+) is bound by residues Cys-30, Cys-33, Cys-49, and Cys-52. A C4-type zinc finger spans residues 30–52 (CTSCEQVLYSEELKRNMHVCPKC).

This sequence belongs to the AccD/PCCB family. In terms of assembly, acetyl-CoA carboxylase is a heterohexamer composed of biotin carboxyl carrier protein (AccB), biotin carboxylase (AccC) and two subunits each of ACCase subunit alpha (AccA) and ACCase subunit beta (AccD). Zn(2+) is required as a cofactor.

Its subcellular location is the cytoplasm. It carries out the reaction N(6)-carboxybiotinyl-L-lysyl-[protein] + acetyl-CoA = N(6)-biotinyl-L-lysyl-[protein] + malonyl-CoA. Its pathway is lipid metabolism; malonyl-CoA biosynthesis; malonyl-CoA from acetyl-CoA: step 1/1. Component of the acetyl coenzyme A carboxylase (ACC) complex. Biotin carboxylase (BC) catalyzes the carboxylation of biotin on its carrier protein (BCCP) and then the CO(2) group is transferred by the transcarboxylase to acetyl-CoA to form malonyl-CoA. This is Acetyl-coenzyme A carboxylase carboxyl transferase subunit beta from Actinobacillus pleuropneumoniae serotype 3 (strain JL03).